Here is a 718-residue protein sequence, read N- to C-terminus: MHSTQIPPQQKQKRRLRLTVLAAAASMLAAACVSGDDNNNGNGSNPNTKPANIGTVTINSYNGTTDDLLTAGLGKDGLASATAPLPANPTAPTAAELRRYAIHTNYRAIVDTTASGGYGSLYGPNVDAQGNVTGSDGKVAGVEYLAFSDDGSGQQNVTMLVQIPASFNTSKPCMITATSSGSRGVYGAIATGEWGLKRGCAVAYTDKGTGAAPHDLDTDTVPLIDGTRATRAAAGKNAQFAAPAGATSLADFTAANPHRLAFKHAHSQRNPEKDWGKFTLQAVEFAIWAINDRFGAVSANGTRQRTLDKDRIVVIASSVSNGGGAAVAAAEQDAGGLIDGVAVGEPNLNMPPNTGIVVQRGATPVAASGRTLYDYTTTANLLQHCAARATALTQAPFYTNPATATFFANRCQTLAEKGLVSGANTDEQSASALQALHDAGWEAESDDLHPSLAVFDVAAAISVNYANAYAQASVTDRLCGYSFASTLTDLKPAAIAPAALASMFATGNGVPPQPPVQLINDLDPQHGPYLNLASVSPSTLREDLNYDGANCLRSLLAGSDAAARALQAGQALTLRNGNLRGKPAVIVHGRSDGLLPVNHTSRPYLGLNRQQEGVTSKLSYVEVENAQHFDAFIGLVPGYSNRYVPLHVYLNRALDAVYDNLTAGKALPPSQVLRTTPRGGTLNTPAPALLPSNVPPFAASPAAGNAITVNANAVQVPD.

Ser-320 functions as the Charge relay system in the catalytic mechanism.

This sequence belongs to the D-(-)-3-hydroxybutyrate oligomer hydrolase family.

Its subcellular location is the cytoplasm. The catalysed reaction is (3R)-hydroxybutanoate dimer + H2O = 2 (R)-3-hydroxybutanoate + H(+). The protein operates within lipid metabolism; butanoate metabolism. With respect to regulation, inhibited by diisopropylfluorophosphate (DFP). Participates in the degradation of poly-3-hydroxybutyrate (PHB). It works downstream of poly(3-hydroxybutyrate) depolymerase, hydrolyzing D(-)-3-hydroxybutyrate oligomers of various length (3HB-oligomers) into 3HB-monomers. Seems to have also poly(3-hydroxybutyrate) depolymerase activity since it is able to release 3HB-monomers from artificial amorphous PHB. In Cupriavidus necator (strain ATCC 17699 / DSM 428 / KCTC 22496 / NCIMB 10442 / H16 / Stanier 337) (Ralstonia eutropha), this protein is D-(-)-3-hydroxybutyrate oligomer hydrolase (phaZ2).